Reading from the N-terminus, the 161-residue chain is Allophycocyanin alpha chain (161 aa).

An N4-methylasparagine modification is found at Asn-71. Cys-81 is a (2R,3E)-phycocyanobilin binding site.

Belongs to the phycobiliprotein family. As to quaternary structure, heterodimer of an alpha and a beta chain. Contains one covalently linked phycocyanobilin chromophore.

Its subcellular location is the plastid. The protein resides in the chloroplast thylakoid membrane. Functionally, light-harvesting photosynthetic bile pigment-protein from the phycobiliprotein complex. Allophycocyanin has a maximum absorption at approximately 650 nanometers. In Cyanidium caldarium (Red alga), this protein is Allophycocyanin alpha chain (apcA).